The sequence spans 475 residues: Cytosolic non-specific dipeptidase (475 aa).

Position 58 is a phosphoserine (Ser-58). His-99 contacts Mn(2+). Asp-101 is an active-site residue. Position 132 (Asp-132) interacts with Mn(2+). Glu-166 functions as the Proton acceptor in the catalytic mechanism. Residues 166 to 167 (EE), Asp-195, and His-228 each bind substrate. Mn(2+) contacts are provided by Glu-167 and Asp-195. Ser-299 carries the phosphoserine modification. Thr-330, Arg-343, Ser-417, and His-445 together coordinate substrate. Position 445 (His-445) interacts with Mn(2+).

This sequence belongs to the peptidase M20A family. Homodimer. It depends on Mn(2+) as a cofactor. In terms of tissue distribution, highly expressed in the parafascicular nucleus of the thalamus, tuberomammillary nucleus of the hypothalamus and the mitral cell layer of the olfactory bulb.

The protein resides in the cytoplasm. The catalysed reaction is Hydrolysis of dipeptides, preferentially hydrophobic dipeptides including prolyl amino acids.. It carries out the reaction L-threonyl-L-threonine + H2O = 2 L-threonine. The enzyme catalyses L-threonyl-L-serine + H2O = L-threonine + L-serine. It catalyses the reaction L-seryl-L-threonine + H2O = L-threonine + L-serine. The catalysed reaction is L-cysteinylglycine + H2O = L-cysteine + glycine. It carries out the reaction L-alanyl-L-cysteine + H2O = L-cysteine + L-alanine. The enzyme catalyses (S)-lactate + L-phenylalanine = N-[(S)-lactoyl]-L-phenylalanine + H2O. With respect to regulation, inhibited by bestatin. Its function is as follows. Catalyzes the peptide bond hydrolysis in dipeptides, displaying a non-redundant activity toward threonyl dipeptides. Mediates threonyl dipeptide catabolism in a tissue-specific way. Has high dipeptidase activity toward cysteinylglycine, an intermediate metabolite in glutathione metabolism. Metabolizes N-lactoyl-amino acids, both through hydrolysis to form lactic acid and amino acids, as well as through their formation by reverse proteolysis. Plays a role in the regulation of cell cycle arrest and apoptosis. The polypeptide is Cytosolic non-specific dipeptidase (Cndp2) (Mus musculus (Mouse)).